The following is a 385-amino-acid chain: Glycerol-3-phosphate dehydrogenase [NAD(+)] 1 (385 aa).

Residues 29-34 (GSGNWG), F121, K144, and A177 contribute to the NAD(+) site. K144 contacts substrate. K232 (proton acceptor) is an active-site residue. 2 residues coordinate NAD(+): R296 and Q325. 296–297 (RN) contacts substrate. The residue at position 376 (S376) is a Phosphoserine. T382 carries the phosphothreonine modification.

The protein belongs to the NAD-dependent glycerol-3-phosphate dehydrogenase family.

The protein localises to the cytoplasm. The catalysed reaction is sn-glycerol 3-phosphate + NAD(+) = dihydroxyacetone phosphate + NADH + H(+). The chain is Glycerol-3-phosphate dehydrogenase [NAD(+)] 1 (gpd1) from Schizosaccharomyces pombe (strain 972 / ATCC 24843) (Fission yeast).